The chain runs to 26 residues: Photosystem II stability/assembly factor HCF136, chloroplastic (26 aa).

It belongs to the Ycf48 family.

The protein resides in the plastid. Its subcellular location is the chloroplast thylakoid lumen. Essential for photosystem II (PSII) biogenesis; required for assembly of an early intermediate in PSII assembly that includes D2 (psbD) and cytochrome b559. The chain is Photosystem II stability/assembly factor HCF136, chloroplastic from Populus euphratica (Euphrates poplar).